We begin with the raw amino-acid sequence, 252 residues long: 2-succinyl-6-hydroxy-2,4-cyclohexadiene-1-carboxylate synthase (252 aa).

It belongs to the AB hydrolase superfamily. MenH family. Monomer.

It catalyses the reaction 5-enolpyruvoyl-6-hydroxy-2-succinyl-cyclohex-3-ene-1-carboxylate = (1R,6R)-6-hydroxy-2-succinyl-cyclohexa-2,4-diene-1-carboxylate + pyruvate. It functions in the pathway quinol/quinone metabolism; 1,4-dihydroxy-2-naphthoate biosynthesis; 1,4-dihydroxy-2-naphthoate from chorismate: step 3/7. The protein operates within quinol/quinone metabolism; menaquinone biosynthesis. Catalyzes a proton abstraction reaction that results in 2,5-elimination of pyruvate from 2-succinyl-5-enolpyruvyl-6-hydroxy-3-cyclohexene-1-carboxylate (SEPHCHC) and the formation of 2-succinyl-6-hydroxy-2,4-cyclohexadiene-1-carboxylate (SHCHC). This is 2-succinyl-6-hydroxy-2,4-cyclohexadiene-1-carboxylate synthase from Escherichia coli O81 (strain ED1a).